The following is a 279-amino-acid chain: Large ribosomal subunit protein uL2 (279 aa).

Disordered stretches follow at residues 30–59 (EKSLVRPLPKKGGRNNTGRITTRHKGGGHK) and 225–279 (VMNP…KNKR). Over residues 50 to 59 (TTRHKGGGHK) the composition is skewed to basic residues. A compositionally biased stretch (basic and acidic residues) spans 253-268 (PEGRTRRPNKESDKLI). The segment covering 269 to 279 (VRRRRTGKNKR) has biased composition (basic residues).

This sequence belongs to the universal ribosomal protein uL2 family. In terms of assembly, part of the 50S ribosomal subunit. Forms a bridge to the 30S subunit in the 70S ribosome.

In terms of biological role, one of the primary rRNA binding proteins. Required for association of the 30S and 50S subunits to form the 70S ribosome, for tRNA binding and peptide bond formation. It has been suggested to have peptidyltransferase activity; this is somewhat controversial. Makes several contacts with the 16S rRNA in the 70S ribosome. This Kocuria rhizophila (strain ATCC 9341 / DSM 348 / NBRC 103217 / DC2201) protein is Large ribosomal subunit protein uL2.